A 207-amino-acid chain; its full sequence is Ribonuclease HII (207 aa).

An RNase H type-2 domain is found at 1–207 (MDVLGIDEAG…ATVEKMKNSQ (207 aa)). 3 residues coordinate a divalent metal cation: Asp7, Glu8, and Asp105.

This sequence belongs to the RNase HII family. Mn(2+) serves as cofactor. Requires Mg(2+) as cofactor.

Its subcellular location is the cytoplasm. It carries out the reaction Endonucleolytic cleavage to 5'-phosphomonoester.. Endonuclease that specifically degrades the RNA of RNA-DNA hybrids. In Methanobrevibacter smithii (strain ATCC 35061 / DSM 861 / OCM 144 / PS), this protein is Ribonuclease HII.